A 464-amino-acid polypeptide reads, in one-letter code: Citrate synthase, mitochondrial (464 aa).

The transit peptide at 1-27 directs the protein to the mitochondrion; that stretch reads MALLTAAARLFGAKNASCLVLAARHAS. Residues 2–21 carry the SIFI-degron motif; sequence ALLTAAARLFGAKNASCLVL. K76 is subject to N6-acetyllysine; alternate. K76 carries the N6-succinyllysine; alternate modification. An N6-succinyllysine mark is found at K103 and K193. S226 bears the Phosphoserine mark. H301 is an active-site residue. Residues K321 and K327 each carry the N6-acetyllysine; alternate modification. N6-succinyllysine; alternate is present on residues K321 and K327. H347 is a catalytic residue. An oxaloacetate-binding site is contributed by R356. N6-acetyllysine; alternate is present on K375. K375 is modified (N6-succinyllysine; alternate). K382 is modified (N6-acetyllysine). Residue K393 is modified to N6-acetyllysine; alternate. N6-succinyllysine; alternate is present on K393. K395 carries the post-translational modification N6,N6,N6-trimethyllysine. D402 is an active-site residue. R428 and R448 together coordinate oxaloacetate. K450 is subject to N6-succinyllysine. The residue at position 459 (K459) is an N6-acetyllysine; alternate. K459 bears the N6-succinyllysine; alternate mark.

Belongs to the citrate synthase family. Homodimer. In terms of processing, methylated. Trimethylation at Lys-395 by CSKMT decreases citrate synthase activity. In response to mitochondrial stress, the precursor protein is ubiquitinated by the SIFI complex in the cytoplasm before mitochondrial import, leading to its degradation. Within the SIFI complex, UBR4 initiates ubiquitin chain that are further elongated or branched by KCMF1.

It is found in the mitochondrion matrix. It carries out the reaction oxaloacetate + acetyl-CoA + H2O = citrate + CoA + H(+). It functions in the pathway carbohydrate metabolism; tricarboxylic acid cycle; isocitrate from oxaloacetate: step 1/2. In terms of biological role, key enzyme of the Krebs tricarboxylic acid cycle which catalyzes the synthesis of citrate from acetyl coenzyme A and oxaloacetate. The polypeptide is Citrate synthase, mitochondrial (CS) (Sus scrofa (Pig)).